We begin with the raw amino-acid sequence, 771 residues long: Nitrogen regulation protein NtrY (771 aa).

The next 4 membrane-spanning stretches (helical) occupy residues 22 to 46 (FGLF…ILMG), 56 to 76 (VVIS…AMVG), 99 to 122 (IVGL…SLTL), and 295 to 319 (VAFA…GLNF). Residues 321–374 (KWLVAPIRRLMSAADHVAEGNLDVRVPIYRAEGDLASLAETFNKMTHELRSQRE) form the HAMP domain. A PAS domain is found at 386-458 (RRRFTEAVLS…HARQRSVQGN (73 aa)). A Histidine kinase domain is found at 511–728 (RIAHEIKNPL…WIRLTLKAEG (218 aa)). His514 bears the Phosphohistidine; by autocatalysis mark. The tract at residues 727 to 771 (EGPKAEPTDASTKATGAATPAAPAASAMARDAAADSAARGKNERT) is disordered. Low complexity predominate over residues 740 to 763 (ATGAATPAAPAASAMARDAAADSA).

Its subcellular location is the cell membrane. It carries out the reaction ATP + protein L-histidine = ADP + protein N-phospho-L-histidine.. Member of the two-component regulatory system NtrY/NtrX involved in nitrogen level control. Probably activates NtrX by phosphorylation. This is Nitrogen regulation protein NtrY (ntrY) from Azorhizobium caulinodans (strain ATCC 43989 / DSM 5975 / JCM 20966 / LMG 6465 / NBRC 14845 / NCIMB 13405 / ORS 571).